We begin with the raw amino-acid sequence, 287 residues long: Survival motor neuron protein (287 aa).

A disordered region spans residues 1–28 (MGGGGGGFPEPEDSVLFRRGTGESDDSD). The interval 9–40 (PEPEDSVLFRRGTGESDDSDVWDDTALIKAYD) is P1 (binding site for GEMIN2). At Thr21 the chain carries Phosphothreonine. Ser24 and Ser27 each carry phosphoserine. Lys47 participates in a covalent cross-link: Glycyl lysine isopeptide (Lys-Gly) (interchain with G-Cter in SUMO2). Disordered regions lie at residues 51 to 86 (KNGD…PSKQ) and 149 to 221 (NAQE…PPPH). Over residues 64–77 (GTPKRKSAKNKSQR) the composition is skewed to basic residues. Phosphothreonine is present on Thr65. Thr80 is modified (phosphothreonine; by PKA). The 61-residue stretch at 86–146 (QWKVGDNCCA…LSPTSEVANI (61 aa)) folds into the Tudor domain. Residues 92–204 (NCCAIWSEDG…MPRSGLGPGK (113 aa)) form a required for interaction with RPP20/POP7 region. Low complexity predominate over residues 149-160 (NAQENENESQIS). Positions 167–179 (SSRSPLNKPNNIR) are enriched in polar residues. A Glycyl lysine isopeptide (Lys-Gly) (interchain with G-Cter in SUMO2) cross-link involves residue Lys204. Pro residues predominate over residues 211-221 (GPPPPPPPPPH). Residues 234 to 261 (PPMIPPPPPICPDSLDDADALGSMLISW) form a P2 (binding site for SM B) region. Residues 273–287 (GFKQSQKEGRYSHFN) form a required for interaction with SYNCRIP region.

This sequence belongs to the SMN family. In terms of assembly, homooligomer; may form higher order homooligomers in the dimer to octamer range. Part of the core SMN complex that contains SMN1, GEMIN2/SIP1, DDX20/GEMIN3, GEMIN4, GEMIN5, GEMIN6, GEMIN7, GEMIN8 and STRAP/UNRIP. Part of the SMN-Sm complex that contains SMN1, GEMIN2/SIP1, DDX20/GEMIN3, GEMIN4, GEMIN5, GEMIN6, GEMIN7, GEMIN8, STRAP/UNRIP and the Sm proteins SNRPB, SNRPD1, SNRPD2, SNRPD3, SNRPE, SNRPF and SNRPG. Component of an import snRNP complex composed of KPNB1, RNUT1, SMN1 and ZNF259. Interacts with DDX20, FBL, NOLA1, RNUT1, SYNCRIP and with several spliceosomal snRNP core Sm proteins, including SNRPB, SNRPD1, SNRPD2, SNRPD3, SNRPE and ILF3. Interacts with GEMIN2; the interaction is direct. Interacts with GEMIN3; the interaction is direct. Interacts with GEMIN8; the interaction is direct. Interacts with SNRPB; the interaction is direct. Interacts (via Tudor domain) with SNRPD1 (via C-terminus); the interaction is direct. Interacts with SNRPD2; the interaction is direct. Interacts (via Tudor domain) with SNRPD3 (via C-terminus); the interaction is direct. Interacts with SNRPE; the interaction is direct. Interacts with OSTF1, LSM10, LSM11 and RPP20/POP7. Interacts (via C-terminal region) with ZPR1 (via C-terminal region). Interacts (via Tudor domain) with COIL. Interacts with SETX; recruits SETX to POLR2A. Interacts with POLR2A (via the C-terminal domain (CTD)). Interacts with PRMT5. Interacts with XRN2. Interacts (via C-terminus) with FMR1 (via C-terminus); the interaction is direct and occurs in a RNA-independent manner. Interacts (via Tudor domain) with SF3B2 ('Arg-508'-methylated form). Interacts with WRAP53/TCAB1. Interacts (via Tudor domain) with ELAVL4 in an RNA-independent manner; the interaction is required for localization of ELAVL4 to RNA granules. Interacts with FRG1.

Its subcellular location is the nucleus. The protein resides in the gem. The protein localises to the cajal body. It is found in the cytoplasm. It localises to the cytoplasmic granule. Its subcellular location is the perikaryon. The protein resides in the cell projection. The protein localises to the neuron projection. It is found in the axon. It localises to the myofibril. Its subcellular location is the sarcomere. The protein resides in the z line. In terms of biological role, the SMN complex catalyzes the assembly of small nuclear ribonucleoproteins (snRNPs), the building blocks of the spliceosome, and thereby plays an important role in the splicing of cellular pre-mRNAs. Most spliceosomal snRNPs contain a common set of Sm proteins SNRPB, SNRPD1, SNRPD2, SNRPD3, SNRPE, SNRPF and SNRPG that assemble in a heptameric protein ring on the Sm site of the small nuclear RNA to form the core snRNP (Sm core). In the cytosol, the Sm proteins SNRPD1, SNRPD2, SNRPE, SNRPF and SNRPG are trapped in an inactive 6S pICln-Sm complex by the chaperone CLNS1A that controls the assembly of the core snRNP. To assemble core snRNPs, the SMN complex accepts the trapped 5Sm proteins from CLNS1A forming an intermediate. Binding of snRNA inside 5Sm ultimately triggers eviction of the SMN complex, thereby allowing binding of SNRPD3 and SNRPB to complete assembly of the core snRNP. Within the SMN complex, SMN1 acts as a structural backbone and together with GEMIN2 it gathers the Sm complex subunits. Ensures the correct splicing of U12 intron-containing genes that may be important for normal motor and proprioceptive neurons development. Also required for resolving RNA-DNA hybrids created by RNA polymerase II, that form R-loop in transcription terminal regions, an important step in proper transcription termination. May also play a role in the metabolism of small nucleolar ribonucleoprotein (snoRNPs). The chain is Survival motor neuron protein (SMN1) from Bos taurus (Bovine).